The sequence spans 148 residues: Snaclec 27 (148 aa).

Positions 1–23 (WGDSSSSASACWSCFSLVSGIGA) are cleaved as a signal peptide. Cystine bridges form between Cys-27–Cys-38, Cys-55–Cys-144, and Cys-121–Cys-136. A C-type lectin domain is found at 34–145 (HEGHCYKVFS…CSSTQQFVCK (112 aa)).

This sequence belongs to the snaclec family. Heterodimer; disulfide-linked. As to expression, expressed by the venom gland.

It is found in the secreted. In terms of biological role, interferes with one step of hemostasis (modulation of platelet aggregation, or coagulation cascade, for example). This is Snaclec 27 from Echis ocellatus (Ocellated saw-scaled viper).